The chain runs to 1449 residues: ABC transporter G family member 21 (1449 aa).

The span at 1 to 10 shows a compositional bias: basic and acidic residues; that stretch reads MEEYELREIA. A disordered region spans residues 1–49; it reads MEEYELREIALQEGGSNLDINTPPNYDNPVGDGSSPPDSPDIQKSENQF. The segment covering 14–25 has biased composition (polar residues); that stretch reads GGSNLDINTPPN. Residues 130-383 enclose the ABC transporter 1 domain; sequence ISFFNLFKPS…FIDLGFDCEP (254 aa). One can recognise an ABC transmembrane type-2 1 domain in the interval 488-731; it reads WGDKFSLISR…ILSVEGKDYL (244 aa). 5 consecutive transmembrane segments (helical) span residues 519-539, 577-597, 602-622, 634-654, and 747-767; these read IPGL…NAFL, IPLT…MFGL, GKFF…TNLF, ISQN…GYTI, and FITY…MEYF. The region spanning 818-1062 is the ABC transporter 2 domain; sequence FTWQNINYTV…LTSYFERYGV (245 aa). 854-861 is an ATP binding site; sequence GSSGAGKT. The ABC transmembrane type-2 2 domain maps to 1152-1386; that stretch reads FYTYGSFIQS…PISEPLTGYV (235 aa). A run of 6 helical transmembrane segments spans residues 1155 to 1175, 1188 to 1208, 1228 to 1248, 1266 to 1286, 1296 to 1316, and 1423 to 1443; these read YGSF…FWSL, FIFE…PQFI, FAIS…TIFF, FYFW…GQAV, AHTL…VMVI, and LALI…FVYI.

Belongs to the ABC transporter superfamily. ABCG family. PDR (TC 3.A.1.205) subfamily.

It is found in the membrane. The chain is ABC transporter G family member 21 (abcG21) from Dictyostelium discoideum (Social amoeba).